The following is a 255-amino-acid chain: Formate hydrogenlyase subunit 7 (255 aa).

4 residues coordinate [4Fe-4S] cluster: Cys-45, Cys-51, Cys-115, and Cys-145.

Belongs to the complex I 20 kDa subunit family. FHL comprises of a formate dehydrogenase, unidentified electron carriers and a hydrogenase (isoenzyme 3). In this non-energy conserving pathway molecular hydrogen and carbodioxide from formate are released. Requires [4Fe-4S] cluster as cofactor.

This Escherichia coli (strain K12) protein is Formate hydrogenlyase subunit 7 (hycG).